The sequence spans 159 residues: Na(+)/H(+) antiporter subunit E1 (159 aa).

A run of 4 helical transmembrane segments spans residues 1 to 21 (MAIQ…VTNS), 27 to 47 (FVLG…VLPG), 60 to 80 (LIIT…KIIL), and 101 to 121 (WQLV…VLGI).

The protein belongs to the CPA3 antiporters (TC 2.A.63) subunit E family. May form a heterooligomeric complex that consists of seven subunits: mnhA1, mnhB1, mnhC1, mnhD1, mnhE1, mnhF1 and mnhG1.

Its subcellular location is the cell membrane. Functionally, mnh complex is a Na(+)/H(+) antiporter involved in Na(+) excretion. The sequence is that of Na(+)/H(+) antiporter subunit E1 (mnhE1) from Staphylococcus epidermidis (strain ATCC 35984 / DSM 28319 / BCRC 17069 / CCUG 31568 / BM 3577 / RP62A).